The chain runs to 505 residues: RNA-splicing ligase RtcB homolog (505 aa).

5 residues coordinate Mn(2+): D119, C122, H227, H259, and H353. 226–230 (NHYAE) is a binding site for GMP. GMP is bound by residues 353-354 (HN), 402-405 (GGTM), S409, 428-431 (HGAG), and K504. H428 acts as the GMP-histidine intermediate in catalysis.

Belongs to the RtcB family. Catalytic component of the tRNA-splicing ligase complex. Requires Mn(2+) as cofactor.

It carries out the reaction a 3'-end 3'-phospho-ribonucleotide-RNA + a 5'-end dephospho-ribonucleoside-RNA + GTP = a ribonucleotidyl-ribonucleotide-RNA + GMP + diphosphate. The enzyme catalyses a 3'-end 2',3'-cyclophospho-ribonucleotide-RNA + a 5'-end dephospho-ribonucleoside-RNA + GTP + H2O = a ribonucleotidyl-ribonucleotide-RNA + GMP + diphosphate + H(+). Its function is as follows. Catalytic subunit of the tRNA-splicing ligase complex that acts by directly joining spliced tRNA halves to mature-sized tRNAs by incorporating the precursor-derived splice junction phosphate into the mature tRNA as a canonical 3',5'-phosphodiester. May act as an RNA ligase with broad substrate specificity, and may function toward other RNAs. The sequence is that of RNA-splicing ligase RtcB homolog from Nematostella vectensis (Starlet sea anemone).